Consider the following 507-residue polypeptide: Hexokinase-5 (507 aa).

A helical transmembrane segment spans residues Ala-4–Ala-24. One can recognise a Hexokinase domain in the interval Arg-44 to Ala-498. The hexokinase small subdomain stretch occupies residues Thr-99–Val-237. ADP is bound by residues Gly-113, Thr-114, and Asn-115. The D-glucose site is built by Thr-203, Lys-204, Asn-238, and Asp-239. Positions Asn-238–Asp-487 are hexokinase large subdomain. Thr-262 serves as a coordination point for ADP. D-glucose-binding residues include Asn-265, Glu-293, and Glu-324. Gly-452 provides a ligand contact to ADP.

The protein belongs to the hexokinase family. As to expression, expressed in roots, leaves, flowers, immature seeds, endosperm and seed coat.

Its subcellular location is the plastid. The protein resides in the chloroplast outer membrane. The enzyme catalyses a D-hexose + ATP = a D-hexose 6-phosphate + ADP + H(+). It carries out the reaction D-fructose + ATP = D-fructose 6-phosphate + ADP + H(+). The catalysed reaction is D-glucose + ATP = D-glucose 6-phosphate + ADP + H(+). It functions in the pathway carbohydrate metabolism; hexose metabolism. It participates in carbohydrate degradation; glycolysis; D-glyceraldehyde 3-phosphate and glycerone phosphate from D-glucose: step 1/4. In terms of biological role, fructose and glucose phosphorylating enzyme. Functions as a glucose sensor for plant growth and photosynthesis. Is essential for pollen development, germination, and tube growth. Its activity is necessary for the starch utilization pathway during pollen germination and tube growth, as well as for starch biosynthesis during pollen maturation. The protein is Hexokinase-5 (HXK5) of Oryza sativa subsp. japonica (Rice).